A 600-amino-acid polypeptide reads, in one-letter code: MSMRTEYCGLVTEHLLGQTVSLCGWVHRRRDHGGVIFIDLRDREGLVQVVCDPDRAEMFAAAEGVRNEFCIQVKGLVRGRPEGTINAGLKSGRIEVLCHELNVLNASVTPPFQLDDDNLSETTRLTHRVLDLRRPQMQHNLRLRYRVAIEARKYLDEQGFIDIETPMLTKSTPEGARDYLVPSRVNAGQFFALPQSPQLFKQLLMVANFDRYYQITKCFRDEDLRADRQPEFTQIDCETSFLGEQEIRDLFEDMIRHIFKTTIDVELDATFPVMPYSEAMARFGSDKPDLRVKLEFTELTDAMKDVDFKVFSTPANTKDGRVAALRVPKGGELTRGDIDGYTEFVRIYGAKGLAWIKVNERAKGRDGLQSPIVKNLHDASIAAILERTGAQDGDIIFFAADRAKVVNDSLGALRLKIGHSEFGKANGLVEAGWKPLWVVDFPMFEYDDEEARYVAAHHPFTSPKDEHLEYLETDPGRCLAKAYDMVLNGWEIGGGSVRIHREEVQSKVFRALKIGPEEAQAKFGFLLDALQYGAPPHGGIAFGLDRIVTMMAGADSIRDVIAFPKTQRAQCLLTQAPSPVDERQLRELHIRLRQPEQPKA.

Glutamate 174 is a binding site for L-aspartate. The tract at residues 198–201 is aspartate; it reads QLFK. L-aspartate is bound at residue arginine 220. Residues 220–222 and glutamine 229 each bind ATP; that span reads RDE. Histidine 457 lines the L-aspartate pocket. Glutamate 491 serves as a coordination point for ATP. Arginine 498 contributes to the L-aspartate binding site. ATP is bound at residue 543 to 546; sequence GLDR.

It belongs to the class-II aminoacyl-tRNA synthetase family. Type 1 subfamily. As to quaternary structure, homodimer.

It is found in the cytoplasm. It carries out the reaction tRNA(Asx) + L-aspartate + ATP = L-aspartyl-tRNA(Asx) + AMP + diphosphate. In terms of biological role, aspartyl-tRNA synthetase with relaxed tRNA specificity since it is able to aspartylate not only its cognate tRNA(Asp) but also tRNA(Asn). Reaction proceeds in two steps: L-aspartate is first activated by ATP to form Asp-AMP and then transferred to the acceptor end of tRNA(Asp/Asn). This Burkholderia pseudomallei (strain 668) protein is Aspartate--tRNA(Asp/Asn) ligase.